Reading from the N-terminus, the 412-residue chain is NADH-quinone oxidoreductase subunit D (412 aa).

Belongs to the complex I 49 kDa subunit family. As to quaternary structure, NDH-1 is composed of 14 different subunits. Subunits NuoB, C, D, E, F, and G constitute the peripheral sector of the complex.

The protein resides in the cell inner membrane. The catalysed reaction is a quinone + NADH + 5 H(+)(in) = a quinol + NAD(+) + 4 H(+)(out). Its function is as follows. NDH-1 shuttles electrons from NADH, via FMN and iron-sulfur (Fe-S) centers, to quinones in the respiratory chain. The immediate electron acceptor for the enzyme in this species is believed to be ubiquinone. Couples the redox reaction to proton translocation (for every two electrons transferred, four hydrogen ions are translocated across the cytoplasmic membrane), and thus conserves the redox energy in a proton gradient. In Sulfurimonas denitrificans (strain ATCC 33889 / DSM 1251) (Thiomicrospira denitrificans (strain ATCC 33889 / DSM 1251)), this protein is NADH-quinone oxidoreductase subunit D.